The sequence spans 302 residues: DDRGK domain-containing protein 1 (302 aa).

Residues 1 to 21 (MDPLLLGSVGVLVLAVTLIIW) form a helical membrane-spanning segment. Over 22-302 (RLLKLQWDEK…IRLETPSAAE (281 aa)) the chain is Cytoplasmic. The tract at residues 101–178 (EYDEDGKKIG…EREEKERKEH (78 aa)) is disordered. Residues 118 to 178 (QAKEEKRQMR…EREEKERKEH (61 aa)) are compositionally biased toward basic and acidic residues.

Belongs to the DDRGK1 family.

Its subcellular location is the endoplasmic reticulum membrane. Its function is as follows. Substrate adapter for ufmylation, the covalent attachment of the ubiquitin-like modifier ufm-1 to substrate proteins. The polypeptide is DDRGK domain-containing protein 1 (Caenorhabditis elegans).